A 105-amino-acid chain; its full sequence is Small ribosomal subunit protein uS10 (105 aa).

Belongs to the universal ribosomal protein uS10 family. In terms of assembly, part of the 30S ribosomal subunit.

In terms of biological role, involved in the binding of tRNA to the ribosomes. The sequence is that of Small ribosomal subunit protein uS10 from Francisella philomiragia subsp. philomiragia (strain ATCC 25017 / CCUG 19701 / FSC 153 / O#319-036).